Reading from the N-terminus, the 601-residue chain is Vesicular glutamate transporter 3 (601 aa).

The Cytoplasmic portion of the chain corresponds to 1-89 (MPFKAFDTFK…CSCCGIPKRY (89 aa)). A helical transmembrane segment spans residues 90–110 (IIAVMSGLGFCISFGIRCNLG). The Vesicular segment spans residues 111 to 143 (VAIVEMVNNSTVYVDGKPEIQTAQFNWDPETVG). Residue Asn-119 is glycosylated (N-linked (GlcNAc...) asparagine). Residues 144–164 (LIHGSFFWGYIVTQIPGGFIS) traverse the membrane as a helical segment. Residues 165 to 166 (NK) lie on the Cytoplasmic side of the membrane. Residues 167 to 187 (FAASRVFGAAIFLTSTLNMFI) form a helical membrane-spanning segment. At 188 to 195 (PSAARVHY) the chain is on the vesicular side. A helical membrane pass occupies residues 196–216 (GCVMGVRILQGLVEGVTYPAC). Residues 217–234 (HGMWSKWAPPLERSRLAT) are Cytoplasmic-facing. Residues 235 to 255 (TSFCGSYAGAVVAMPLAGVLV) traverse the membrane as a helical segment. At 256–262 (QYIGWAS) the chain is on the vesicular side. The helical transmembrane segment at 263–283 (VFYIYGMFGIIWYMFWLLQAY) threads the bilayer. At 284 to 327 (ECPAAHPTISNAERTYIETSIGEGANLASLSKFNTPWRRFFTSL) the chain is on the cytoplasmic side. The chain crosses the membrane as a helical span at residues 328 to 348 (PVYAIIVANFCRSWTFYLLLI). Topologically, residues 349–366 (SQPAYFEEVFGFAISKVG) are vesicular. The helical transmembrane segment at 367–387 (LLSAVPHMVMTIVVPIGGQLA) threads the bilayer. The Cytoplasmic segment spans residues 388-403 (DYLRSRKILTTTAVRK). A helical membrane pass occupies residues 404-424 (IMNCGGFGMEATLLLVVGFSH). Topologically, residues 425 to 426 (TK) are vesicular. A helical transmembrane segment spans residues 427 to 447 (GVAISFLVLAVGFSGFAISGF). Residues 448-460 (NVNHLDIAPRYAS) lie on the Cytoplasmic side of the membrane. A helical membrane pass occupies residues 461-481 (ILMGISNGVGTLSGMVCPLIV). The Vesicular portion of the chain corresponds to 482–494 (GAMTKHKTREEWQ). A helical transmembrane segment spans residues 495 to 515 (NVFLIAALVHYSGVIFYGVFA). Residues 516-598 (SGEKQDWADP…LSYQAEGDFS (83 aa)) lie on the Cytoplasmic side of the membrane. Residues 576–601 (RQQRESAFDGEEPLSYQAEGDFSETS) form a disordered region.

This sequence belongs to the major facilitator superfamily. Sodium/anion cotransporter family. VGLUT subfamily. In terms of tissue distribution, expressed in restricted areas of the brain. Highest expression is found in the neurons of the basal forebrain, the hippocampal formation, and the majority of the neurons of the mesencephalic raphe nuclei. Expressed in inner hair cells of the ear.

The protein resides in the cytoplasmic vesicle. It localises to the secretory vesicle. The protein localises to the synaptic vesicle membrane. It is found in the cell membrane. Its subcellular location is the synapse. The protein resides in the synaptosome. The catalysed reaction is L-glutamate(out) = L-glutamate(in). It catalyses the reaction 3 Na(+)(out) + phosphate(out) = 3 Na(+)(in) + phosphate(in). It carries out the reaction chloride(in) = chloride(out). With respect to regulation, the L-glutamate uniporter activity exhibits a biphasic dependence on chloride concentration. Chloride channel activity is allosterically activated by lumenal H(+) and Cl(-) leading to synaptic vesicles acidification. The L-glutamate transport activity is allosterically activated by lumenal H(+) and Cl(-), preventing non-vesicular L-glutamate release. In terms of biological role, multifunctional transporter that transports L-glutamate as well as multiple ions such as chloride, sodium and phosphate. At the synaptic vesicle membrane, mainly functions as an uniporter that mediates the uptake of L-glutamate into synaptic vesicles at presynaptic nerve terminals of excitatory neural cells. The L-glutamate uniporter activity is electrogenic and is driven by the proton electrochemical gradient, mainly by the electrical gradient established by the vacuolar H(+)-ATPase across the synaptic vesicle membrane. In addition, functions as a chloride channel that allows a chloride permeation through the synaptic vesicle membrane that affects the proton electrochemical gradient and promotes synaptic vesicles acidification. At the plasma membrane, following exocytosis, functions as a symporter of Na(+) and phosphate from the extracellular space to the cytoplasm allowing synaptic phosphate homeostasis regulation. The symporter activity is electrogenic. Moreover, operates synergistically with SLC18A3/VACHT under a constant H(+) gradient, thereby allowing striatal vesicular acetylcholine uptake. This is Vesicular glutamate transporter 3 from Mus musculus (Mouse).